A 316-amino-acid polypeptide reads, in one-letter code: Pantothenate kinase (316 aa).

95–102 (GSVAVGKS) provides a ligand contact to ATP.

It belongs to the prokaryotic pantothenate kinase family.

It localises to the cytoplasm. It carries out the reaction (R)-pantothenate + ATP = (R)-4'-phosphopantothenate + ADP + H(+). Its pathway is cofactor biosynthesis; coenzyme A biosynthesis; CoA from (R)-pantothenate: step 1/5. This Shewanella sediminis (strain HAW-EB3) protein is Pantothenate kinase.